Here is a 223-residue protein sequence, read N- to C-terminus: Sugar fermentation stimulation protein homolog (223 aa).

It belongs to the SfsA family.

The protein is Sugar fermentation stimulation protein homolog of Thermosipho melanesiensis (strain DSM 12029 / CIP 104789 / BI429).